Here is a 278-residue protein sequence, read N- to C-terminus: Formamidopyrimidine-DNA glycosylase (278 aa).

Proline 2 acts as the Schiff-base intermediate with DNA in catalysis. Catalysis depends on glutamate 3, which acts as the Proton donor. Lysine 59 functions as the Proton donor; for beta-elimination activity in the catalytic mechanism. DNA-binding residues include histidine 93, arginine 112, and arginine 153. The segment at 238 to 272 (NVYDRAGEPCPRCQSTIERIVVAQRSTYFCPTCQI) adopts an FPG-type zinc-finger fold. Catalysis depends on arginine 262, which acts as the Proton donor; for delta-elimination activity.

This sequence belongs to the FPG family. Monomer. The cofactor is Zn(2+).

It catalyses the reaction Hydrolysis of DNA containing ring-opened 7-methylguanine residues, releasing 2,6-diamino-4-hydroxy-5-(N-methyl)formamidopyrimidine.. It carries out the reaction 2'-deoxyribonucleotide-(2'-deoxyribose 5'-phosphate)-2'-deoxyribonucleotide-DNA = a 3'-end 2'-deoxyribonucleotide-(2,3-dehydro-2,3-deoxyribose 5'-phosphate)-DNA + a 5'-end 5'-phospho-2'-deoxyribonucleoside-DNA + H(+). Its function is as follows. Involved in base excision repair of DNA damaged by oxidation or by mutagenic agents. Acts as a DNA glycosylase that recognizes and removes damaged bases. Has a preference for oxidized purines, such as 7,8-dihydro-8-oxoguanine (8-oxoG). Has AP (apurinic/apyrimidinic) lyase activity and introduces nicks in the DNA strand. Cleaves the DNA backbone by beta-delta elimination to generate a single-strand break at the site of the removed base with both 3'- and 5'-phosphates. In Chloroflexus aurantiacus (strain ATCC 29366 / DSM 635 / J-10-fl), this protein is Formamidopyrimidine-DNA glycosylase.